The primary structure comprises 304 residues: Protoheme IX farnesyltransferase (304 aa).

Transmembrane regions (helical) follow at residues 24–44, 45–65, 107–127, 145–165, 172–192, 234–254, and 277–297; these read VMTL…GTIH, PVIA…AAAL, VFVM…FSIF, IVIG…AVTG, VLLF…LALF, WIGG…LVFV, and LFGY…GDRL.

The protein belongs to the UbiA prenyltransferase family. Protoheme IX farnesyltransferase subfamily.

The protein resides in the cell inner membrane. The catalysed reaction is heme b + (2E,6E)-farnesyl diphosphate + H2O = Fe(II)-heme o + diphosphate. Its pathway is porphyrin-containing compound metabolism; heme O biosynthesis; heme O from protoheme: step 1/1. In terms of biological role, converts heme B (protoheme IX) to heme O by substitution of the vinyl group on carbon 2 of heme B porphyrin ring with a hydroxyethyl farnesyl side group. In Novosphingobium aromaticivorans (strain ATCC 700278 / DSM 12444 / CCUG 56034 / CIP 105152 / NBRC 16084 / F199), this protein is Protoheme IX farnesyltransferase.